Here is a 235-residue protein sequence, read N- to C-terminus: FsC-acetyl coenzyme A-N(2)-transacetylase (235 aa).

An N-acetyltransferase domain is found at 14–190 (LELVPLGHEH…RYSITREEWL (177 aa)). CoA is bound by residues 106–108 (FRV), Gly-114, Asn-146, and 151–153 (AVM).

It functions in the pathway siderophore biosynthesis. Its function is as follows. FsC-acetyl coenzyme A-N(2)-transacetylase; part of the siderophore biosynthetic pathway. Aspergillus fumigatus produces 4 types of siderophores, low-molecular-mass iron chelators, including excreted fusarinine C (FsC) and triacetylfusarinine C (TAFC) for iron uptake and intacellular ferricrocin (FC) for hyphal and hydroxyferricrocin (HFC) for conidial iron distribution and storage. TAFC consists of 3 N(2)-acetyl-N(5)-anhydromevalonyl-N(5)-hydroxyornithine residues cyclically linked by ester bonds; FC is a cyclic hexapeptide with the structure Gly-Ser-Gly-(N(5)-acetyl-N(5)-hydroxyornithine)x3. The biosynthesis of all four siderophores depends on the hydroxylation of ornithine, catalyzed by the monooxygenase sidA. Subsequently, the pathways for biosynthesis of extra- and intracellular siderophores split. For biosynthesis of extracellular siderophores, the transacylase sidF transfers anhydromevalonyl to N(5)-hydroxyornithine. The required anhydromevalonyl-CoA moiety is derived from mevalonate by CoA ligation and dehydration catalyzed by sidI and sidH respectively. The acetylation of N(5)-hydroxyornithine for FC biosynthesis involves the constitutively expressed sidL. FC is hydroxylated to HFC by an as yet uncharacterized enzyme during conidiation. Assembly of fusarinine C (FsC) and FC is catalyzed by two different nonribosomal peptide synthetases (NRPS), sidD and sidC respectively. Subsequently, sidG catalyzes N2-acetylation of FsC for forming TAFC. Both extra- and intracellular siderophores are crucial for growth during iron limitation and virulence. This chain is FsC-acetyl coenzyme A-N(2)-transacetylase, found in Aspergillus fumigatus (strain ATCC MYA-4609 / CBS 101355 / FGSC A1100 / Af293) (Neosartorya fumigata).